Consider the following 85-residue polypeptide: Small ribosomal subunit protein bS16 (85 aa).

The protein belongs to the bacterial ribosomal protein bS16 family.

The protein is Small ribosomal subunit protein bS16 of Clostridium novyi (strain NT).